The primary structure comprises 303 residues: Aspartate carbamoyltransferase catalytic subunit (303 aa).

R51 and T52 together coordinate carbamoyl phosphate. K80 lines the L-aspartate pocket. Residues R101, H129, and Q132 each contribute to the carbamoyl phosphate site. L-aspartate-binding residues include R162 and R221. The carbamoyl phosphate site is built by L260 and P261.

The protein belongs to the aspartate/ornithine carbamoyltransferase superfamily. ATCase family. In terms of assembly, heterooligomer of catalytic and regulatory chains.

It catalyses the reaction carbamoyl phosphate + L-aspartate = N-carbamoyl-L-aspartate + phosphate + H(+). Its pathway is pyrimidine metabolism; UMP biosynthesis via de novo pathway; (S)-dihydroorotate from bicarbonate: step 2/3. Its function is as follows. Catalyzes the condensation of carbamoyl phosphate and aspartate to form carbamoyl aspartate and inorganic phosphate, the committed step in the de novo pyrimidine nucleotide biosynthesis pathway. The protein is Aspartate carbamoyltransferase catalytic subunit of Saccharolobus islandicus (strain M.14.25 / Kamchatka #1) (Sulfolobus islandicus).